Reading from the N-terminus, the 445-residue chain is MTDSNQPMPLQARKSGALHGTARVPGDKSISHRALILGALAVGETRISGLLEGEDVINTAKAMRALGAKVERTGDCEWRVHGVGVAGFATPEAPLDFGNSGTGCRLAMGAVAGSPIVATFDGDASLRSRPMRRIVDPLELMGAKVVSSSEGGRLPLALQGARDPLPILYRTPVPSAQIKSAVLLAGLSAPGITTVIEAEASRDHTELMLQHFGATIVTEAEGAHGRKISLTGQPELRGAPVVVPADPSSAAFPMVAALVVPGSDIELTDVMTNPLRTGLITTLREMGASIEDSDVRGDAGEPMARFRVRGSKLKGVEVPPERAPSMIDEYLVLAVAAAFAEGTTVMRGLHELRVKESDRLEATAAMLRVNGVAVEIAGDDLIVEGKGHVPGGGVVATHMDHRIAMSALAMGLASDKPVTVDDTAFIATSFPDFVPMMQRLGAEFG.

The segment at 1–25 (MTDSNQPMPLQARKSGALHGTARVP) is disordered. Lys-28, Ser-29, and Arg-33 together coordinate 3-phosphoshikimate. Lys-28 provides a ligand contact to phosphoenolpyruvate. The phosphoenolpyruvate site is built by Gly-101 and Arg-129. 3-phosphoshikimate is bound by residues Ser-175, Gln-177, Asp-328, and Lys-355. Gln-177 lines the phosphoenolpyruvate pocket. Asp-328 serves as the catalytic Proton acceptor. Residues Arg-359 and Arg-402 each coordinate phosphoenolpyruvate.

Belongs to the EPSP synthase family. In terms of assembly, monomer.

The protein resides in the cytoplasm. The enzyme catalyses 3-phosphoshikimate + phosphoenolpyruvate = 5-O-(1-carboxyvinyl)-3-phosphoshikimate + phosphate. It functions in the pathway metabolic intermediate biosynthesis; chorismate biosynthesis; chorismate from D-erythrose 4-phosphate and phosphoenolpyruvate: step 6/7. Catalyzes the transfer of the enolpyruvyl moiety of phosphoenolpyruvate (PEP) to the 5-hydroxyl of shikimate-3-phosphate (S3P) to produce enolpyruvyl shikimate-3-phosphate and inorganic phosphate. The protein is 3-phosphoshikimate 1-carboxyvinyltransferase of Rhodopseudomonas palustris (strain ATCC BAA-98 / CGA009).